Consider the following 389-residue polypeptide: MSRMENNKVTISVIKADVGGLCGHTLAPDELLEACEAVLEEAVDEIILDYYVTRCGDDIDLIMSHKLGCDNEKVHGLAWRAFEEATKVAKELKLYGAGQDLLADSFSGNVRGMGPGCAEMEFVERKSEPIVVFCCDKTDPTAFNYPLFKMFADPFNTAGLVFDPSMISGFKFEVHDVVGHKKVFLDTPEEMYMLLALIGDYEKYAIKRVYRRRDNEIAAVVSTEKLNYIAGEYVGKDDPVAIVRAQSGFPAVGEVLEPFANPHFVPGWMRGSHWGPLMPVGEEDATPTRFDGPARIIALGFQVCDGMLIGPNDLFADKGFDKAREKALEMADIIRRMGPFQPHRLPATMMEYTTVPKVLEALEDRFIPLEGLELIEEGGITRKDRGDVE.

D17 (proton acceptor; for FBP phosphatase activity) is an active-site residue. Mg(2+)-binding residues include D17, H24, D57, and D58. Position 24 (H24) interacts with beta-D-fructose 1,6-bisphosphate. H24 serves as a coordination point for dihydroxyacetone phosphate. Y95 contributes to the beta-D-fructose 1,6-bisphosphate binding site. Residue Q99 participates in Mg(2+) binding. Position 108–109 (108–109) interacts with beta-D-fructose 1,6-bisphosphate; it reads GN. D136 is a binding site for Mg(2+). Residue K137 coordinates beta-D-fructose 1,6-bisphosphate. K137 is a dihydroxyacetone phosphate binding site. The active-site Proton donor/acceptor; for FBP aldolase activity is the Y233. Residues K236, D237, and D238 each contribute to the Mg(2+) site. The active-site Schiff-base intermediate with DHAP; for FBP aldolase activity is the K236. Residues 246–247, R270, D291, and Y352 contribute to the beta-D-fructose 1,6-bisphosphate site; that span reads QS. Dihydroxyacetone phosphate is bound by residues R270 and D291.

This sequence belongs to the FBP aldolase/phosphatase family. As to quaternary structure, homooctamer; dimer of tetramers. Mg(2+) is required as a cofactor.

The catalysed reaction is beta-D-fructose 1,6-bisphosphate + H2O = beta-D-fructose 6-phosphate + phosphate. It catalyses the reaction beta-D-fructose 1,6-bisphosphate = D-glyceraldehyde 3-phosphate + dihydroxyacetone phosphate. It functions in the pathway carbohydrate biosynthesis; gluconeogenesis. Functionally, catalyzes two subsequent steps in gluconeogenesis: the aldol condensation of dihydroxyacetone phosphate (DHAP) and glyceraldehyde-3-phosphate (GA3P) to fructose-1,6-bisphosphate (FBP), and the dephosphorylation of FBP to fructose-6-phosphate (F6P). This chain is Fructose-1,6-bisphosphate aldolase/phosphatase, found in Methanocaldococcus jannaschii (strain ATCC 43067 / DSM 2661 / JAL-1 / JCM 10045 / NBRC 100440) (Methanococcus jannaschii).